A 138-amino-acid chain; its full sequence is Cysteine desulfuration protein SufE (138 aa).

Catalysis depends on Cys51, which acts as the Cysteine persulfide intermediate.

This sequence belongs to the SufE family. In terms of assembly, homodimer. Interacts with SufS.

The protein resides in the cytoplasm. The protein operates within cofactor biosynthesis; iron-sulfur cluster biosynthesis. Functionally, participates in cysteine desulfuration mediated by SufS. Cysteine desulfuration mobilizes sulfur from L-cysteine to yield L-alanine and constitutes an essential step in sulfur metabolism for biosynthesis of a variety of sulfur-containing biomolecules. Functions as a sulfur acceptor for SufS, by mediating the direct transfer of the sulfur atom from the S-sulfanylcysteine of SufS, an intermediate product of cysteine desulfuration process. This is Cysteine desulfuration protein SufE from Escherichia coli O17:K52:H18 (strain UMN026 / ExPEC).